The following is a 530-amino-acid chain: Ubiquitin carboxyl-terminal hydrolase 17-like protein 10 (530 aa).

A USP domain is found at 80-375 (AGLQNMGNTC…QAYVLFYIQK (296 aa)). C89 (nucleophile) is an active-site residue. Catalysis depends on H334, which acts as the Proton acceptor. Basic and acidic residues-rich tracts occupy residues 382-392 (SESVSRGREPR) and 398-410 (DTDR…ELKR). Disordered regions lie at residues 382–410 (SESV…ELKR) and 477–530 (NHHP…LVCQ). The segment covering 484–495 (SSLLNLSSTTPT) has biased composition (low complexity). Residues 496-505 (DQESMNTGTL) show a composition bias toward polar residues. Over residues 510-524 (GRTRRSKGKNKHSKR) the composition is skewed to basic residues.

Belongs to the peptidase C19 family. USP17 subfamily.

Its subcellular location is the nucleus. The protein resides in the endoplasmic reticulum. It carries out the reaction Thiol-dependent hydrolysis of ester, thioester, amide, peptide and isopeptide bonds formed by the C-terminal Gly of ubiquitin (a 76-residue protein attached to proteins as an intracellular targeting signal).. Functionally, deubiquitinating enzyme that removes conjugated ubiquitin from specific proteins to regulate different cellular processes that may include cell proliferation, progression through the cell cycle, apoptosis, cell migration, and the cellular response to viral infection. The sequence is that of Ubiquitin carboxyl-terminal hydrolase 17-like protein 10 (USP17L10) from Homo sapiens (Human).